We begin with the raw amino-acid sequence, 294 residues long: Protein farnesyltransferase/geranylgeranyltransferase type-1 subunit alpha (294 aa).

PFTA repeat units lie at residues 57–91, 92–125, 126–160, 161–194, and 199–233; these read YSLR…HTPS, YIDN…SLTK, NYER…NFND, YSQE…ETSK, and SLEE…KSGP.

It belongs to the protein prenyltransferase subunit alpha family. As to quaternary structure, heterodimer of an alpha(cwp1) and a beta(cpp1 or cwg2) subunit. The cofactor is Mg(2+).

It carries out the reaction L-cysteinyl-[protein] + (2E,6E)-farnesyl diphosphate = S-(2E,6E)-farnesyl-L-cysteinyl-[protein] + diphosphate. The enzyme catalyses geranylgeranyl diphosphate + L-cysteinyl-[protein] = S-geranylgeranyl-L-cysteinyl-[protein] + diphosphate. In terms of biological role, catalyzes the transfer of a farnesyl or geranyl-geranyl moiety from farnesyl or geranyl-geranyl diphosphate to a cysteine at the fourth position from the C-terminus of several proteins having the C-terminal sequence Cys-aliphatic-aliphatic-X. The alpha(cwp1) subunit is thought to participate in a stable complex with the substrate. The beta(cpp1 or cwg2) subunits bind the peptide substrate. The polypeptide is Protein farnesyltransferase/geranylgeranyltransferase type-1 subunit alpha (cwp1) (Schizosaccharomyces pombe (strain 972 / ATCC 24843) (Fission yeast)).